We begin with the raw amino-acid sequence, 236 residues long: E3 ubiquitin-protein ligase RNF187 (236 aa).

The RING-type zinc finger occupies 12-53 (CALCQRAPREPVRADCGHRFCRACVVRFWAEEDGPFPCPECA). Asymmetric dimethylarginine; by PRMT1 is present on residues arginine 98 and arginine 109. Residue lysine 195 forms a Glycyl lysine isopeptide (Lys-Gly) (interchain with G-Cter in ubiquitin) linkage. Serine 200 is modified (phosphoserine). Residues lysine 224 and lysine 225 each participate in a glycyl lysine isopeptide (Lys-Gly) (interchain with G-Cter in ubiquitin) cross-link.

In terms of assembly, homodimer. Interacts with JUN, independently of JUN phosphorylation. Interacts (via C-terminus) with TRIM7. Post-translationally, ubiquitinated; undergoes 'Lys-48'-linked autoubiquitination in the absence of growth factors and MAP3K1-induced 'Lys-63'-linked polyubiquitination. 'Lys-48'-autoubiquitination leads to degradation by the proteasome, while MAP3K1-induced 'Lys-63'-linked polyubiquitination results in the stabilization of the protein. 'Lys-48'- and 'Lys-63'-linked polyubiquitinations occur most probably on the same 3 C-terminal lysine residues (Lys-195, Lys-224 and Lys-225) and are thus mutually exclusive. Other sites of ubiquitination are not excluded. 'Lys-63'-linked polyubiquitination by TRIM7 in response to growth factor signaling via the MEK/ERK pathway enhances protein stability. Arginine methylation by PRMT1 stabilizes RNF187 by facilitating K63-linked ubiquitin chain formation, and enables dimerization, c-Jun interaction and subsequent AP1 target gene expression.

The protein resides in the cytoplasm. Its subcellular location is the nucleus. The enzyme catalyses S-ubiquitinyl-[E2 ubiquitin-conjugating enzyme]-L-cysteine + [acceptor protein]-L-lysine = [E2 ubiquitin-conjugating enzyme]-L-cysteine + N(6)-ubiquitinyl-[acceptor protein]-L-lysine.. The protein operates within protein modification; protein ubiquitination. Functionally, E3 ubiquitin-protein ligase that acts as a coactivator of JUN-mediated gene activation in response to growth factor signaling via the MAP3K1 pathway, independently from MAPK8. The polypeptide is E3 ubiquitin-protein ligase RNF187 (Rnf187) (Mus musculus (Mouse)).